Reading from the N-terminus, the 272-residue chain is uncharacterized protein (272 aa).

2 stretches are compositionally biased toward basic and acidic residues: residues 136 to 156 (VRREKEKETGETSESDNHIDI) and 231 to 240 (GCKESRRNEP). 2 disordered regions span residues 136–157 (VRREKEKETGETSESDNHIDIH) and 174–272 (VKPK…WAAF). Residues 243–252 (DLSQLKKNLP) are compositionally biased toward polar residues. Residues 253–272 (STAGSGSSKSTGAASGWAAF) are compositionally biased toward low complexity.

This is an uncharacterized protein from Arabidopsis thaliana (Mouse-ear cress).